The sequence spans 255 residues: Adenosylcobinamide-GDP ribazoletransferase (255 aa).

The next 7 helical transmembrane spans lie at 33–53 (IFLP…IELF), 57–77 (FPGF…SGAL), 107–127 (VGSM…GSYA), 136–156 (FTVL…IYSF), 174–194 (AGLI…AAFF), 196–216 (FSLI…FVVA), and 234–254 (IMEL…NIGV).

Belongs to the CobS family. Mg(2+) serves as cofactor.

It localises to the cell membrane. It carries out the reaction alpha-ribazole + adenosylcob(III)inamide-GDP = adenosylcob(III)alamin + GMP + H(+). The enzyme catalyses alpha-ribazole 5'-phosphate + adenosylcob(III)inamide-GDP = adenosylcob(III)alamin 5'-phosphate + GMP + H(+). It functions in the pathway cofactor biosynthesis; adenosylcobalamin biosynthesis; adenosylcobalamin from cob(II)yrinate a,c-diamide: step 7/7. Joins adenosylcobinamide-GDP and alpha-ribazole to generate adenosylcobalamin (Ado-cobalamin). Also synthesizes adenosylcobalamin 5'-phosphate from adenosylcobinamide-GDP and alpha-ribazole 5'-phosphate. The chain is Adenosylcobinamide-GDP ribazoletransferase from Carboxydothermus hydrogenoformans (strain ATCC BAA-161 / DSM 6008 / Z-2901).